The primary structure comprises 68 residues: Beta-toxin Cl13 (68 aa).

The LCN-type CS-alpha/beta domain maps to 1–66 (KEGYLVDYHT…VWPLPNKRCK (66 aa)). Intrachain disulfides connect Cys12–Cys65, Cys16–Cys41, Cys25–Cys46, and Cys29–Cys48. Lys66 is modified (lysine amide).

The protein belongs to the long (4 C-C) scorpion toxin superfamily. Sodium channel inhibitor family. Beta subfamily. As to expression, expressed by the venom gland.

Its subcellular location is the secreted. Beta toxins bind voltage-independently at site-4 of sodium channels (Nav) and shift the voltage of activation toward more negative potentials thereby affecting sodium channel activation and promoting spontaneous and repetitive firing. Inhibits sodium channels Nav1.4/SCN4A, Nav1.5/SCN5A and Nav1.6/SCN8A. Also has a weak inhibitory effect on Nav1.2/SCN2A. Is lethal to mice. The protein is Beta-toxin Cl13 of Centruroides limpidus (Mexican scorpion).